A 164-amino-acid polypeptide reads, in one-letter code: MERFLENAMYTSRWLLAPVYFGLSLGLVALTIKFFQEIVHVLPHIFSVSESELILTLLSLVDMTLVGGLLVMVMFSGYENFVSQLDINEGKEKLSWLGKMDATSLKNKVAASIVAISSIHLLRVFMDAKNVPDNKLMWYVIIHLTFVLSAFVMGYLDRLNKVKH.

4 helical membrane-spanning segments follow: residues 15–35 (LLAP…IKFF), 53–73 (LILT…LVMV), 109–126 (VAAS…RVFM), and 136–156 (LMWY…MGYL).

It belongs to the UPF0114 family.

The protein resides in the cell membrane. The protein is UPF0114 protein KPK_0696 of Klebsiella pneumoniae (strain 342).